The chain runs to 103 residues: Signal recognition particle 19 kDa protein (103 aa).

It belongs to the SRP19 family. In terms of assembly, part of the signal recognition particle protein translocation system, which is composed of SRP and FtsY. Archaeal SRP consists of a 7S RNA molecule of 300 nucleotides and two protein subunits: SRP54 and SRP19.

It localises to the cytoplasm. In terms of biological role, involved in targeting and insertion of nascent membrane proteins into the cytoplasmic membrane. Binds directly to 7S RNA and mediates binding of the 54 kDa subunit of the SRP. The protein is Signal recognition particle 19 kDa protein of Hyperthermus butylicus (strain DSM 5456 / JCM 9403 / PLM1-5).